The primary structure comprises 342 residues: UDP-3-O-acylglucosamine N-acyltransferase (342 aa).

His241 acts as the Proton acceptor in catalysis.

The protein belongs to the transferase hexapeptide repeat family. LpxD subfamily. As to quaternary structure, homotrimer.

It catalyses the reaction a UDP-3-O-[(3R)-3-hydroxyacyl]-alpha-D-glucosamine + a (3R)-hydroxyacyl-[ACP] = a UDP-2-N,3-O-bis[(3R)-3-hydroxyacyl]-alpha-D-glucosamine + holo-[ACP] + H(+). It participates in bacterial outer membrane biogenesis; LPS lipid A biosynthesis. In terms of biological role, catalyzes the N-acylation of UDP-3-O-acylglucosamine using 3-hydroxyacyl-ACP as the acyl donor. Is involved in the biosynthesis of lipid A, a phosphorylated glycolipid that anchors the lipopolysaccharide to the outer membrane of the cell. The protein is UDP-3-O-acylglucosamine N-acyltransferase of Pasteurella multocida (strain Pm70).